The chain runs to 90 residues: MKIAIFTVVLALAVFAVLSFGWEANEKALSEEFTELIHEKEAASETEARECRYFWGECHDHMPCCDWLVCRYKWPITYNICVWNRTFPEK.

Residues 1–19 (MKIAIFTVVLALAVFAVLS) form the signal peptide. Positions 20 to 50 (FGWEANEKALSEEFTELIHEKEAASETEARE) are excised as a propeptide. Disulfide bonds link cysteine 51–cysteine 65, cysteine 58–cysteine 70, and cysteine 64–cysteine 81.

The protein belongs to the neurotoxin 10 (Hwtx-1) family. 13 (Hntx-13) subfamily. As to expression, expressed by the venom gland.

The protein resides in the secreted. Functionally, ion channel inhibitor. In Cyriopagopus hainanus (Chinese bird spider), this protein is U7-theraphotoxin-Hhn1a 2.